Consider the following 235-residue polypeptide: Large ribosomal subunit protein uL4 (235 aa).

Residues R45–H75 are disordered. The segment covering W65 to H75 has biased composition (basic residues).

Belongs to the universal ribosomal protein uL4 family. As to quaternary structure, part of the 50S ribosomal subunit.

Functionally, one of the primary rRNA binding proteins, this protein initially binds near the 5'-end of the 23S rRNA. It is important during the early stages of 50S assembly. It makes multiple contacts with different domains of the 23S rRNA in the assembled 50S subunit and ribosome. This protein only weakly controls expression of the E.coli S10 operon. It is incorporated into E.coli ribosomes, however it is not as firmly associated as the endogenous protein. In terms of biological role, forms part of the polypeptide exit tunnel. In Thermotoga maritima (strain ATCC 43589 / DSM 3109 / JCM 10099 / NBRC 100826 / MSB8), this protein is Large ribosomal subunit protein uL4 (rplD).